A 376-amino-acid polypeptide reads, in one-letter code: Protein STRICTOSIDINE SYNTHASE-LIKE 2 (376 aa).

A signal peptide spans 1–23; sequence MMKLLLVVATSVALIFSVTDLSG. Residues N79 and N244 are each glycosylated (N-linked (GlcNAc...) asparagine).

It belongs to the strictosidine synthase family.

It is found in the vacuole. In Arabidopsis thaliana (Mouse-ear cress), this protein is Protein STRICTOSIDINE SYNTHASE-LIKE 2.